Here is a 74-residue protein sequence, read N- to C-terminus: Protein Vpu (74 aa).

Residues 1–4 lie on the Extracellular side of the membrane; the sequence is MLWL. Residues 5–25 form a helical membrane-spanning segment; it reads GFIALGVAIIIAAIIWVLLYK. Residues 26 to 74 lie on the Cytoplasmic side of the membrane; that stretch reads EYKKIKLQEKIEQIRQKIRDRTEDRGKESDGDAEWLAILLSPDKLDNWV. S54 is modified (phosphoserine; by host CK2).

Belongs to the HIV-1 VPU protein family. Homopentamer. Interacts with host CD4 and BRTC; these interactions induce proteasomal degradation of CD4. Interacts with host BST2; this interaction leads to the degradation of host BST2. Interacts with host FBXW11. Interacts with host AP1M1; this interaction plays a role in the mistrafficking and subsequent degradation of host BST2. Interacts with host RANBP2; this interaction allows Vpu to down-regulate host BLM sumoylation. In terms of processing, phosphorylated by host CK2. This phosphorylation is necessary for interaction with human BTRC and degradation of CD4.

The protein resides in the host membrane. With respect to regulation, ion channel activity is inhibited by hexamethylene amiloride in vitro. In terms of biological role, enhances virion budding by targeting host CD4 and Tetherin/BST2 to proteasome degradation. Degradation of CD4 prevents any unwanted premature interactions between viral Env and its host receptor CD4 in the endoplasmic reticulum. Degradation of antiretroviral protein Tetherin/BST2 is important for virion budding, as BST2 tethers new viral particles to the host cell membrane. Mechanistically, Vpu bridges either CD4 or BST2 to BTRC, a substrate recognition subunit of the Skp1/Cullin/F-box protein E3 ubiquitin ligase, induces their ubiquitination and subsequent proteasomal degradation. The alteration of the E3 ligase specificity by Vpu seems to promote the degradation of host IKBKB, leading to NF-kappa-B down-regulation and subsequent apoptosis. Acts as a viroporin that forms an oligomeric ion channel in membranes. Modulates the host DNA repair mechanisms to promote degradation of nuclear viral cDNA in cells that are already productively infected in order to suppress immune sensing and proviral hyper-integration (superinfection). Manipulates PML-NBs and modulates SUMOylation of host BLM protein thereby enhancing its DNA-end processing activity toward viral unintegrated linear DNA. Also inhibits RAD52-mediated homologous repair of viral cDNA, preventing the generation of dead-end circular forms of single copies of the long terminal repeat and permitting sustained nucleolytic attack. This chain is Protein Vpu, found in Human immunodeficiency virus type 1 group N (isolate YBF106) (HIV-1).